The chain runs to 115 residues: Transcription initiation factor IIA subunit 2 (115 aa).

This sequence belongs to the TFIIA subunit 2 family. As to quaternary structure, TFIIA is a heterodimer of the large unprocessed subunit 1 and a small subunit gamma.

Its subcellular location is the nucleus. Functionally, TFIIA is a component of the transcription machinery of RNA polymerase II and plays an important role in transcriptional activation. TFIIA in a complex with tbp mediates transcriptional activity. This chain is Transcription initiation factor IIA subunit 2 (gtf2a2), found in Dictyostelium discoideum (Social amoeba).